The chain runs to 601 residues: Proline--tRNA ligase (601 aa).

This sequence belongs to the class-II aminoacyl-tRNA synthetase family. ProS type 1 subfamily. As to quaternary structure, homodimer.

The protein resides in the cytoplasm. It catalyses the reaction tRNA(Pro) + L-proline + ATP = L-prolyl-tRNA(Pro) + AMP + diphosphate. Catalyzes the attachment of proline to tRNA(Pro) in a two-step reaction: proline is first activated by ATP to form Pro-AMP and then transferred to the acceptor end of tRNA(Pro). As ProRS can inadvertently accommodate and process non-cognate amino acids such as alanine and cysteine, to avoid such errors it has two additional distinct editing activities against alanine. One activity is designated as 'pretransfer' editing and involves the tRNA(Pro)-independent hydrolysis of activated Ala-AMP. The other activity is designated 'posttransfer' editing and involves deacylation of mischarged Ala-tRNA(Pro). The misacylated Cys-tRNA(Pro) is not edited by ProRS. This Tropheryma whipplei (strain TW08/27) (Whipple's bacillus) protein is Proline--tRNA ligase.